Reading from the N-terminus, the 983-residue chain is UPF0746 protein DDB_G0280809 (983 aa).

Residues 1–21 (MISNKRKEIDTINEHHEKNND) show a composition bias toward basic and acidic residues. Residues 1 to 26 (MISNKRKEIDTINEHHEKNNDDSDGI) form a disordered region. Residues 42-76 (SGSTNYRELQIIAKSLGLASNGKKQLVYNRIEGYF) form the SAP domain. A disordered region spans residues 391-413 (HTTPTSTSTSTSTSTSTYTSTST). Residues 392–413 (TTPTSTSTSTSTSTSTYTSTST) are compositionally biased toward low complexity.

The protein belongs to the UPF0746 family.

In Dictyostelium discoideum (Social amoeba), this protein is UPF0746 protein DDB_G0280809.